Here is a 29-residue protein sequence, read N- to C-terminus: Galanin (29 aa).

The residue at position 29 (Ala-29) is an Alanine amide.

Belongs to the galanin family.

The protein localises to the secreted. Its function is as follows. Contracts smooth muscle of the gastrointestinal and genitourinary tract, regulates growth hormone release, modulates insulin release, and may be involved in the control of adrenal secretion. The chain is Galanin (GAL) from Alligator mississippiensis (American alligator).